The chain runs to 440 residues: Gamma-aminobutyric acid receptor subunit pi (440 aa).

The N-terminal stretch at 1 to 23 is a signal peptide; it reads MKRSLHLTFVCLSLFSARMCVQG. The Extracellular portion of the chain corresponds to 24-241; that stretch reads NQFNIEVSRS…LVLQFELQRN (218 aa). 3 N-linked (GlcNAc...) asparagine glycosylation sites follow: Asn43, Asn102, and Asn145. Residues Cys160 and Cys174 are joined by a disulfide bond. N-linked (GlcNAc...) asparagine glycans are attached at residues Asn196 and Asn228. The chain crosses the membrane as a helical span at residues 242 to 262; the sequence is VLYFILETYVPSTFLVVLSWV. Topologically, residues 263–270 are cytoplasmic; the sequence is SFWISLDS. A helical membrane pass occupies residues 271–290; it reads VPARTCIGVTTVLSMTTLMI. The Extracellular segment spans residues 291–301; that stretch reads GSRTSLPNTNC. A helical membrane pass occupies residues 302–322; sequence FIKAIDVYLGICFSFVFGALL. At 323 to 419 the chain is on the cytoplasmic side; the sequence is EYAVAHYSSL…NPSNVDRYSK (97 aa). The chain crosses the membrane as a helical span at residues 420-440; that stretch reads LLFPLIFMLANVFYWAYYMYF.

It belongs to the ligand-gated ion channel (TC 1.A.9) family. Gamma-aminobutyric acid receptor (TC 1.A.9.5) subfamily. GABRP sub-subfamily. Heteropentamer, formed by a combination of alpha (GABRA1-6), beta (GABRB1-3), gamma (GABRG1-3), delta (GABRD), epsilon (GABRE), rho (GABRR1-3), pi (GABRP) and theta (GABRQ) chains, each subunit exhibiting distinct physiological and pharmacological properties.

It localises to the cell membrane. Its subcellular location is the apical cell membrane. It carries out the reaction chloride(in) = chloride(out). Pi subunit of the heteropentameric ligand-gated chloride channel gated by gamma-aminobutyric acid (GABA). GABA-gated chloride channels, also named GABA(A) receptors (GABAAR), consist of five subunits arranged around a central pore and contain GABA active binding site(s) located at the alpha and beta subunit interfaces. When activated by GABA, GABAARs selectively allow the flow of chloride anions across the cell membrane down their electrochemical gradient. Pi-containing GABAARs are mostly located in peripheral tissues. In the uterus, pi subunits modulate uterus contraction by altering the sensitivity of GABAARs to pregnanolone. In the lungs, pi-containing GABAARs contribute to pulmonary fluid transport via luminal secretion of chloride. The chain is Gamma-aminobutyric acid receptor subunit pi (GABRP) from Bos taurus (Bovine).